The chain runs to 642 residues: Chaperone protein DnaK (642 aa).

T199 is subject to Phosphothreonine; by autocatalysis. A compositionally biased stretch (basic and acidic residues) spans 570–585; sequence EELEQASKDGDKEAID. The tract at residues 570 to 642 is disordered; the sequence is EELEQASKDG…FEEVKDDDKK (73 aa). The segment covering 600 to 620 has biased composition (low complexity); that stretch reads EAAQQQQAQQGAEGAAGGEQQ. Residues 627–642 are compositionally biased toward acidic residues; the sequence is DVVDAEFEEVKDDDKK.

It belongs to the heat shock protein 70 family.

Functionally, acts as a chaperone. In Idiomarina loihiensis (strain ATCC BAA-735 / DSM 15497 / L2-TR), this protein is Chaperone protein DnaK.